Consider the following 431-residue polypeptide: Glutamate-1-semialdehyde 2,1-aminomutase (431 aa).

Lys269 bears the N6-(pyridoxal phosphate)lysine mark.

It belongs to the class-III pyridoxal-phosphate-dependent aminotransferase family. HemL subfamily. Homodimer. It depends on pyridoxal 5'-phosphate as a cofactor.

It localises to the cytoplasm. The enzyme catalyses (S)-4-amino-5-oxopentanoate = 5-aminolevulinate. It participates in porphyrin-containing compound metabolism; protoporphyrin-IX biosynthesis; 5-aminolevulinate from L-glutamyl-tRNA(Glu): step 2/2. In Francisella tularensis subsp. tularensis (strain SCHU S4 / Schu 4), this protein is Glutamate-1-semialdehyde 2,1-aminomutase.